Consider the following 1080-residue polypeptide: Zorya protein ZorD (1080 aa).

Positions 596-779 (LRSPEETAGC…WSLFDFAQPG (184 aa)) constitute a Helicase ATP-binding domain. Residues 904–1069 (KLNWLLKILA…DMLCATPDLS (166 aa)) form the Helicase C-terminal domain.

Its function is as follows. Component of antiviral defense system Zorya type I, composed of ZorA, ZorB, ZorC and ZorD. Expression of Zorya type I in E.coli (strain MG1655) confers 10,000-fold resistance to phage SECphi27, 100-fold resistance to lambda, and 10-fold resistance to T7. While most T7 infected Zorya-containing cells undergo abortive infection, a minority produce viable phage progeny. These eventually accumulate to a high multiplicity of infection, leading to culture collapse by 2 hours after initial infection. ZorA and ZorB probably assemble in the cell inner membrane and exert their effect there. This may have ATPase activity. This chain is Zorya protein ZorD, found in Escherichia coli O139:H28 (strain E24377A / ETEC).